A 289-amino-acid chain; its full sequence is Segregation and condensation protein A (289 aa).

Over residues 1–18 (MSEDRRSPTDEAPREGEL) the composition is skewed to basic and acidic residues. The disordered stretch occupies residues 1–24 (MSEDRRSPTDEAPREGELPRSPGD).

The protein belongs to the ScpA family. In terms of assembly, component of the Structural Maintenance of Chromosome (SMC) condensin-like complex composed of ScpA, ScpB and the Smc homodimer. ScpA and ScpB bind to the head domain of Smc. The presence of the three proteins is required for the association of the complex with DNA.

It localises to the cytoplasm. Its function is as follows. A conditionally essential component of the chromosome segregation machinery. Participates in chromosomal partition during cell division. Important for positioning of ParB-parS complexes (ori of replication) and of the ter replication site, as well as for segration of the ParB-parS complex and thus chromosome segregation. May act via the formation of a condensin-like complex containing Smc, ScpA and ScpB that pulls DNA away from mid-cell into both cell halves. The polypeptide is Segregation and condensation protein A (Myxococcus xanthus (strain DK1622)).